The chain runs to 89 residues: MLDFLNRMFSRDGGNSKNIAKERLRLVLVHDRSSVSPEIVEALKEDLIKVISSYMEIDERSLEVNLNNDEASVALVANIPVLGLKRRNV.

The protein belongs to the MinE family.

Prevents the cell division inhibition by proteins MinC and MinD at internal division sites while permitting inhibition at polar sites. This ensures cell division at the proper site by restricting the formation of a division septum at the midpoint of the long axis of the cell. The chain is Cell division topological specificity factor from Heliobacterium modesticaldum (strain ATCC 51547 / Ice1).